We begin with the raw amino-acid sequence, 111 residues long: Macrodomain Ori protein (111 aa).

This sequence belongs to the MaoP family.

Involved in the organization of the Ori region of the chromosome into a macrodomain (MD). It constrains DNA mobility in the Ori macrodomain and limits long-distance DNA interactions with other chromosomal regions. This Haemophilus influenzae (strain ATCC 51907 / DSM 11121 / KW20 / Rd) protein is Macrodomain Ori protein.